Consider the following 238-residue polypeptide: DNA repair protein RecO (238 aa).

It belongs to the RecO family.

Involved in DNA repair and RecF pathway recombination. This is DNA repair protein RecO from Aliivibrio fischeri (strain ATCC 700601 / ES114) (Vibrio fischeri).